Reading from the N-terminus, the 577-residue chain is Arginine--tRNA ligase (577 aa).

The 'HIGH' region signature appears at valine 124–histidine 132.

Belongs to the class-I aminoacyl-tRNA synthetase family. As to quaternary structure, monomer.

The protein localises to the cytoplasm. The catalysed reaction is tRNA(Arg) + L-arginine + ATP = L-arginyl-tRNA(Arg) + AMP + diphosphate. The protein is Arginine--tRNA ligase of Salmonella typhi.